We begin with the raw amino-acid sequence, 296 residues long: 4-hydroxybenzoate octaprenyltransferase (296 aa).

Helical transmembrane passes span 29 to 49 (AGWLLLLWPTLSALWVAAGGF), 52 to 72 (WHLLSVFTLGTILMRSAGCCI), 103 to 123 (LVLGAVLALLAFALVLTTNAI), 151 to 171 (VLGVAFGMGIPMAFAAVLGEV), 176 to 196 (WLLMLGNLFWVLAYDTEYAMV), 220 to 240 (VILLCYLAFIVIWDVALMPYV), 243 to 263 (ALFTIAFALAFGQVAWHYTLI), and 275 to 295 (FRLNHWLGFTLFVGIAGSYAL).

The protein belongs to the UbiA prenyltransferase family. The cofactor is Mg(2+).

The protein resides in the cell inner membrane. The enzyme catalyses all-trans-octaprenyl diphosphate + 4-hydroxybenzoate = 4-hydroxy-3-(all-trans-octaprenyl)benzoate + diphosphate. It functions in the pathway cofactor biosynthesis; ubiquinone biosynthesis. Catalyzes the prenylation of para-hydroxybenzoate (PHB) with an all-trans polyprenyl group. Mediates the second step in the final reaction sequence of ubiquinone-8 (UQ-8) biosynthesis, which is the condensation of the polyisoprenoid side chain with PHB, generating the first membrane-bound Q intermediate 3-octaprenyl-4-hydroxybenzoate. The chain is 4-hydroxybenzoate octaprenyltransferase from Albidiferax ferrireducens (strain ATCC BAA-621 / DSM 15236 / T118) (Rhodoferax ferrireducens).